The chain runs to 276 residues: Formamidopyrimidine-DNA glycosylase (276 aa).

The Schiff-base intermediate with DNA role is filled by Pro-2. The active-site Proton donor is Glu-3. Lys-58 acts as the Proton donor; for beta-elimination activity in catalysis. Positions 92, 111, and 154 each coordinate DNA. The FPG-type zinc-finger motif lies at Gln-239–Val-273. The active-site Proton donor; for delta-elimination activity is Arg-263.

It belongs to the FPG family. In terms of assembly, monomer. Zn(2+) serves as cofactor.

The enzyme catalyses Hydrolysis of DNA containing ring-opened 7-methylguanine residues, releasing 2,6-diamino-4-hydroxy-5-(N-methyl)formamidopyrimidine.. It carries out the reaction 2'-deoxyribonucleotide-(2'-deoxyribose 5'-phosphate)-2'-deoxyribonucleotide-DNA = a 3'-end 2'-deoxyribonucleotide-(2,3-dehydro-2,3-deoxyribose 5'-phosphate)-DNA + a 5'-end 5'-phospho-2'-deoxyribonucleoside-DNA + H(+). Functionally, involved in base excision repair of DNA damaged by oxidation or by mutagenic agents. Acts as a DNA glycosylase that recognizes and removes damaged bases. Has a preference for oxidized purines, such as 7,8-dihydro-8-oxoguanine (8-oxoG). Has AP (apurinic/apyrimidinic) lyase activity and introduces nicks in the DNA strand. Cleaves the DNA backbone by beta-delta elimination to generate a single-strand break at the site of the removed base with both 3'- and 5'-phosphates. This Lactobacillus acidophilus (strain ATCC 700396 / NCK56 / N2 / NCFM) protein is Formamidopyrimidine-DNA glycosylase.